The primary structure comprises 2161 residues: SH3 and multiple ankyrin repeat domains protein 1 (2161 aa).

The interval 1–53 (MTHSPATSEDEERHSASECPEGGSESDSSPDGPGRGPRGTRGQGSGAPGSLAS) is disordered. Residues 17 to 32 (SECPEGGSESDSSPDG) show a composition bias toward low complexity. Positions 33–47 (PGRGPRGTRGQGSGA) are enriched in gly residues. Y186 is subject to Phosphotyrosine. ANK repeat units follow at residues 212–245 (SGET…FRAR), 246–278 (DGMT…YKDR), 279–312 (RGLT…IADE), 313–345 (NGWQ…AQNA), 346–378 (SGNT…VKNN), and 379–395 (NGQT…NFEL). Disordered regions lie at residues 412-433 (ESPK…VPPA) and 455-546 (GAAS…SRGR). The segment covering 455–479 (GAASSGAPGPTSGSQGQSQPSAPTT) has biased composition (low complexity). The span at 527-542 (PAGGTGGSGGPGGSLG) shows a compositional bias: gly residues. At S540 the chain carries Phosphoserine. At R544 the chain carries Omega-N-methylarginine. The region spanning 554-613 (VPGRSFMAVKSYQAQAEGEISLSKGEKIKVLSIGEGGFWEGQVKGRVGWFPSDCLEEVAN) is the SH3 domain. Residues 663-757 (TVLLQKKDSE…TLMVKVVMVT (95 aa)) enclose the PDZ domain. 2 positions are modified to phosphoserine: S671 and S791. The interval 832 to 886 (TISASESPGPGGLASLGKHRPKGFFATESSFDPHHRAQPSYERPSFLPPGPGLML) is disordered. A Phosphoserine modification is found at S890. Disordered stretches follow at residues 909–1229 (SRSL…LDFT), 1241–1289 (RREG…KSID), 1353–1720 (LGLA…GVAS), 1734–1785 (GQAF…PTSP), 1827–1860 (LPTA…QPQA), 1892–1983 (PWAR…TRHL), and 1996–2023 (RRAP…LPIL). A compositionally biased stretch (pro residues) spans 920 to 939 (IPPPPTTSPPEPPYSTPPVP). Residue R950 is modified to Omega-N-methylarginine. The segment covering 996 to 1020 (AHHHPPHHHHHHAPPPQPHHHHAHP) has biased composition (basic residues). R1051, R1090, and R1101 each carry omega-N-methylarginine. Residues 1127-1144 (PPAPSPTSPASPQPPPAV) show a composition bias toward pro residues. Residues 1164-1181 (STSSSGRSSQGSSTEAEP) are compositionally biased toward low complexity. The span at 1199–1220 (SPAPAMSPVPPSPSPVPTPASP) shows a compositional bias: pro residues. The span at 1241–1252 (RREGGWQNEARR) shows a compositional bias: basic and acidic residues. R1253 bears the Asymmetric dimethylarginine mark. Position 1287 is a phosphoserine (S1287). The span at 1359 to 1368 (ARERALKESS) shows a compositional bias: basic and acidic residues. The segment covering 1374–1391 (PQPPPRPPSPRYEAPPPT) has biased composition (pro residues). Omega-N-methylarginine is present on R1423. S1436 carries the phosphoserine modification. Pro residues-rich tracts occupy residues 1517 to 1532 (GVPP…PSPT) and 1583 to 1609 (PLTP…PPPA). Residues 1618–1636 (DSTASSLTSYDSEVATLTQ) show a composition bias toward polar residues. Positions 1644 to 1670 (DPHPPGPPAPAAPAPAAPQPGPDPPPG) are enriched in pro residues. Over residues 1678 to 1688 (VDSRSSSDHPL) the composition is skewed to basic and acidic residues. The span at 1692-1702 (SSASTLSSLSA) shows a compositional bias: low complexity. 2 stretches are compositionally biased toward gly residues: residues 1703–1718 (EGGG…GAGV) and 1764–1774 (ASGGLRPGPSG). Low complexity predominate over residues 1775–1785 (GLRDPVTPTSP). The segment covering 1844-1855 (PGPPPPPLPGPL) has biased composition (pro residues). An Omega-N-methylarginine modification is found at R1895. 3 stretches are compositionally biased toward low complexity: residues 1917–1940 (SSLQ…VSSL), 1954–1980 (TGTG…STST), and 1996–2006 (RRAPSPSLLPA). Omega-N-methylarginine is present on residues R2016, R2036, and R2074. The 64-residue stretch at 2098–2161 (WTKFDVADWL…DRALKFFLER (64 aa)) folds into the SAM domain.

This sequence belongs to the SHANK family. In terms of assembly, may homomultimerize via its SAM domain. Interacts with the C-terminus of SSTR2 via the PDZ domain. Interacts with IGSF9, SHARPIN, SPTAN1, HOMER1 and DLGAP1/GKAP isoforms 1 and 2. Part of a complex with DLG4/PSD-95 and DLGAP1/GKAP. Interacts with BAIAP2. Interacts with HOMER1 and HOMER3. In terms of tissue distribution, expressed in brain particularly in the amygdala, hippocampus, substantia nigra and thalamus. Isoform 2 seems to be expressed ubiquitously.

It localises to the cytoplasm. The protein resides in the postsynaptic density. The protein localises to the synapse. In terms of biological role, seems to be an adapter protein in the postsynaptic density (PSD) of excitatory synapses that interconnects receptors of the postsynaptic membrane including NMDA-type and metabotropic glutamate receptors via complexes with GKAP/PSD-95 and Homer, respectively, and the actin-based cytoskeleton. Plays a role in the structural and functional organization of the dendritic spine and synaptic junction. The chain is SH3 and multiple ankyrin repeat domains protein 1 (SHANK1) from Homo sapiens (Human).